The primary structure comprises 108 residues: N(4)-acetylcytidine amidohydrolase (108 aa).

Residues 5 to 102 (ITFFQRLERS…NDLFFISFRV (98 aa)) enclose the ASCH domain. The active-site Proton acceptor is Lys20. Thr23 (nucleophile) is an active-site residue. Residue Glu73 is the Proton donor of the active site.

It belongs to the N(4)-acetylcytidine amidohydrolase family.

It catalyses the reaction N(4)-acetylcytidine + H2O = cytidine + acetate + H(+). It carries out the reaction N(4)-acetyl-2'-deoxycytidine + H2O = 2'-deoxycytidine + acetate + H(+). The enzyme catalyses N(4)-acetylcytosine + H2O = cytosine + acetate + H(+). Functionally, catalyzes the hydrolysis of N(4)-acetylcytidine (ac4C). This is N(4)-acetylcytidine amidohydrolase from Moritella marina (Vibrio marinus).